Consider the following 600-residue polypeptide: MIEVLLVTICLAVFPYQGSSIILESGNVNDYEVVYPRKVTTLPKGALQQNYEDAMQYEFKVNGEPVVLHLEKNKELFSEDYSETHYSPDGREITTYPSVEDHCYYHGRIQNEADSTASISACNGLKGHFKLQGETYLIEPLKLPDSEAHAVFKYENVVKEDEAPKMCGVTETNWKSDEPIKKASQLVVTAEQQRFPRRYVKLAIVADRRMYMKHQKNLKPWVFQMVNSVHQIYRSMNVLIALVYLNIWKKNDKITVQSASDVTLDLFAEWRETVLLRRKKHDCAHLLTAIDFDGPTIGRAHIASMCNSKLSVGIVQNYTEINLVNAIVMAHELGHNLGISHDGNQCNCHTCIMSAVISNPPSERFSNCSEDYHQSFLTAYNPQCILNAPSKTDIITPPVCGNELLEEGEECDCGSPENCQYQCCDAASCKLHSWVKCESGECCDQCRFTSAGTECRAARSECDIAESCTGQSADCPTDDFHRNGQPCLSNHGYCYNGNCPVMHYQCIALFGSNAIVGQDECFDFNMKGEQYFYCRKEYEKYIPCAQEDVKCGRLFCFYTNNMDICRYNYSDIGIVDHGTKCADGKVCNSNRHCVDVTTVY.

An N-terminal signal peptide occupies residues 1–20; sequence MIEVLLVTICLAVFPYQGSS. The propeptide occupies 21-191; it reads IILESGNVND…KASQLVVTAE (171 aa). Gln-192 is subject to Pyrrolidone carboxylic acid. Positions 198–389 constitute a Peptidase M12B domain; the sequence is RYVKLAIVAD…YNPQCILNAP (192 aa). Intrachain disulfides connect Cys-306-Cys-384, Cys-346-Cys-368, and Cys-348-Cys-351. An N-linked (GlcNAc...) asparagine glycan is attached at Asn-317. His-331 serves as a coordination point for Zn(2+). Glu-332 is an active-site residue. The Zn(2+) site is built by His-335 and His-341. N-linked (GlcNAc...) asparagine glycosylation is present at Asn-367. In terms of domain architecture, Disintegrin spans 397 to 483; sequence PPVCGNELLE…DCPTDDFHRN (87 aa). Val-399, Asn-402, Leu-404, Glu-406, Glu-409, and Asp-412 together coordinate Ca(2+). Disulfide bonds link Cys-400/Cys-429, Cys-411/Cys-424, Cys-413/Cys-419, Cys-423/Cys-446, Cys-437/Cys-443, Cys-442/Cys-468, Cys-455/Cys-475, Cys-462/Cys-494, Cys-487/Cys-499, Cys-506/Cys-556, Cys-521/Cys-565, Cys-534/Cys-544, Cys-551/Cys-587, and Cys-581/Cys-593. The D/ECD-tripeptide signature appears at 461 to 463; the sequence is ECD. Residue Asn-568 is glycosylated (N-linked (GlcNAc...) asparagine).

The protein belongs to the venom metalloproteinase (M12B) family. P-III subfamily. P-IIIa sub-subfamily. As to quaternary structure, monomer. Requires Zn(2+) as cofactor. As to expression, expressed by the venom gland.

It localises to the secreted. Its function is as follows. This metalloproteinase-disintegrin-like impairs hemostasis in the envenomed animal. This is Zinc metalloproteinase-disintegrin-like stejnihagin-A from Trimeresurus stejnegeri (Chinese green tree viper).